We begin with the raw amino-acid sequence, 276 residues long: Large ribosomal subunit protein uL2 (276 aa).

The tract at residues 224-276 (VMNPVDHPHGGGEGKAPIGRKSPMTPWGKPTLGYKTRKKKNKSDKFIIRRRKK) is disordered. Residues 258-276 (KTRKKKNKSDKFIIRRRKK) show a composition bias toward basic residues.

This sequence belongs to the universal ribosomal protein uL2 family. In terms of assembly, part of the 50S ribosomal subunit. Forms a bridge to the 30S subunit in the 70S ribosome.

One of the primary rRNA binding proteins. Required for association of the 30S and 50S subunits to form the 70S ribosome, for tRNA binding and peptide bond formation. It has been suggested to have peptidyltransferase activity; this is somewhat controversial. Makes several contacts with the 16S rRNA in the 70S ribosome. The chain is Large ribosomal subunit protein uL2 from Geobacillus kaustophilus (strain HTA426).